A 64-amino-acid chain; its full sequence is UPF0337 protein SAR0874 (64 aa).

The segment at 1 to 40 is disordered; it reads MADESKFEQAKGNVKETVGNVTDNKNLENEGKEDKASGKA. Positions 25–40 are enriched in basic and acidic residues; it reads KNLENEGKEDKASGKA.

The protein belongs to the UPF0337 (CsbD) family.

This chain is UPF0337 protein SAR0874, found in Staphylococcus aureus (strain MRSA252).